A 927-amino-acid polypeptide reads, in one-letter code: Probable dipeptidyl-aminopeptidase B (927 aa).

2 disordered regions span residues 1 to 44 and 58 to 101; these read MAPA…TTSI and GHFE…KNDG. Topologically, residues 1 to 108 are cytoplasmic; that stretch reads MAPAPGMAPY…NDGMNRGMRR (108 aa). 2 stretches are compositionally biased toward basic and acidic residues: residues 19–36 and 58–70; these read HRPEHNDESTGRMSHESE and GHFELDDHDPMKE. A helical; Signal-anchor for type II membrane protein membrane pass occupies residues 109–129; sequence TLIIVAGLLISAWVVGLFFYV. Topologically, residues 130 to 927 are vacuolar; the sequence is SHKSYKPASQ…RSIQPILPIL (798 aa). 2 N-linked (GlcNAc...) asparagine glycosylation sites follow: asparagine 365 and asparagine 530. Residue serine 769 is the Charge relay system of the active site. N-linked (GlcNAc...) asparagine glycosylation occurs at asparagine 828. Active-site charge relay system residues include aspartate 846 and histidine 879.

It belongs to the peptidase S9B family.

The protein resides in the vacuole membrane. It carries out the reaction Release of an N-terminal dipeptide, Xaa-Yaa-|-Zaa-, from a polypeptide, preferentially when Yaa is Pro, provided Zaa is neither Pro nor hydroxyproline.. Functionally, type IV dipeptidyl-peptidase which removes N-terminal dipeptides sequentially from polypeptides having unsubstituted N-termini provided that the penultimate residue is proline. This Podospora anserina (strain S / ATCC MYA-4624 / DSM 980 / FGSC 10383) (Pleurage anserina) protein is Probable dipeptidyl-aminopeptidase B (DAPB).